A 367-amino-acid chain; its full sequence is Peroxisome biogenesis protein 16 (367 aa).

The tract at residues 135-173 (GGETPNEEKDSNQSESQNRAGNSGRNLGPHGLGNQNHHN) is disordered. Residues 147–159 (QSESQNRAGNSGR) are compositionally biased toward polar residues. 2 helical membrane-spanning segments follow: residues 237-257 (ALFAIGEVLYITRPLIYVLFI) and 264-284 (SWIPWAISLSVDTLGMGLLAN).

It belongs to the peroxin-16 family. As to quaternary structure, interacts with APEM9 (via both N- and C-terminus). In terms of processing, the detection of an additional immunorelated polypeptide of 52 kDa suggests a post-translational modification of PEX16. Expressed in roots, siliques, seeds, cotyledons, leaves and flowers. Low expression in leaves and roots.

It localises to the peroxisome membrane. The protein localises to the endoplasmic reticulum membrane. Involved in the formation of peroxisomes, lipid bodies and protein bodies. The chain is Peroxisome biogenesis protein 16 from Arabidopsis thaliana (Mouse-ear cress).